Reading from the N-terminus, the 248-residue chain is Putative amino-acid ABC transporter-binding protein PatH (248 aa).

An N-terminal signal peptide occupies residues 1 to 21 (MKNWIKVAVAAIALSAATVQA).

Belongs to the bacterial solute-binding protein 3 family.

The protein resides in the periplasm. Its function is as follows. Probably part of a binding-protein-dependent transport system for an amino acid. The protein is Putative amino-acid ABC transporter-binding protein PatH (patH) of Vibrio harveyi (Beneckea harveyi).